A 418-amino-acid polypeptide reads, in one-letter code: Deubiquitinase and deneddylase Dub1 (418 aa).

The span at 1–10 shows a compositional bias: polar residues; the sequence is MLSPTNSTSK. The segment at 1–23 is disordered; it reads MLSPTNSTSKKAPVPPQDSSKPV. A helical membrane pass occupies residues 40 to 60; that stretch reads TALAVLLVVVTLGLILLFYSF. The disordered stretch occupies residues 72-143; sequence TRPSTKEQPT…PPLPPKAPKP (72 aa). A compositionally biased stretch (pro residues) spans 86–141; sequence VPLPSPPLAVPRPSTPPPPVISRPSTPPAPTPAISPPSTPSAPKPSTPPPLPPKAP. Residues H288, D305, and C358 contribute to the active site.

The protein belongs to the peptidase C48 family.

Its subcellular location is the secreted. The protein resides in the host cell. It localises to the membrane. Functionally, effector proteins function to alter host cell physiology and promote bacterial survival in host tissues. This protease possesses deubiquitinating and deneddylating activities. This Chlamydia trachomatis serovar D (strain ATCC VR-885 / DSM 19411 / UW-3/Cx) protein is Deubiquitinase and deneddylase Dub1 (cdu1).